Here is a 174-residue protein sequence, read N- to C-terminus: Transcription factor bHLH168 (174 aa).

The bHLH domain maps to 14 to 63 (SLREQRNLREKERRMRMKHLFSILSSHVSPTRRLPVPQLIDQAVSYMIQL).

This sequence belongs to the bHLH protein family.

It localises to the nucleus. The polypeptide is Transcription factor bHLH168 (Arabidopsis thaliana (Mouse-ear cress)).